The chain runs to 309 residues: 2-phospho-L-lactate transferase (309 aa).

Residues Asp50 and Lys89 each coordinate 7,8-didemethyl-8-hydroxy-5-deazariboflavin.

Belongs to the CofD family. Homodimer. Mg(2+) is required as a cofactor.

The enzyme catalyses (2S)-lactyl-2-diphospho-5'-guanosine + 7,8-didemethyl-8-hydroxy-5-deazariboflavin = oxidized coenzyme F420-0 + GMP + H(+). The protein operates within cofactor biosynthesis; coenzyme F420 biosynthesis. Its function is as follows. Catalyzes the transfer of the 2-phospholactate moiety from (2S)-lactyl-2-diphospho-5'-guanosine to 7,8-didemethyl-8-hydroxy-5-deazariboflavin (FO) with the formation of oxidized coenzyme F420-0 and GMP. This is 2-phospho-L-lactate transferase from Methanococcus maripaludis (strain C5 / ATCC BAA-1333).